The primary structure comprises 221 residues: 7-cyano-7-deazaguanine synthase (221 aa).

8-18 (LSGGMDSAAVI) lines the ATP pocket. Zn(2+) is bound by residues cysteine 186, cysteine 196, cysteine 199, and cysteine 202.

It belongs to the QueC family. It depends on Zn(2+) as a cofactor.

It catalyses the reaction 7-carboxy-7-deazaguanine + NH4(+) + ATP = 7-cyano-7-deazaguanine + ADP + phosphate + H2O + H(+). Its pathway is purine metabolism; 7-cyano-7-deazaguanine biosynthesis. Catalyzes the ATP-dependent conversion of 7-carboxy-7-deazaguanine (CDG) to 7-cyano-7-deazaguanine (preQ(0)). The sequence is that of 7-cyano-7-deazaguanine synthase from Stenotrophomonas maltophilia (strain R551-3).